Consider the following 436-residue polypeptide: Antilisterial bacteriocin subtilosin biosynthesis protein AlbD (436 aa).

The next 10 helical transmembrane spans lie at isoleucine 27–isoleucine 47, threonine 55–serine 75, leucine 113–threonine 133, leucine 134–leucine 154, leucine 164–proline 184, threonine 187–leucine 207, alanine 240–methionine 260, isoleucine 270–isoleucine 290, phenylalanine 315–serine 335, and alanine 395–valine 415.

Its subcellular location is the cell membrane. Functionally, involved in the production of the bacteriocin subtilosin. Required for immunity to subtilosin. In Bacillus subtilis (strain 168), this protein is Antilisterial bacteriocin subtilosin biosynthesis protein AlbD (albD).